A 711-amino-acid chain; its full sequence is Triacylglycerol hydrolase DDHD2 (711 aa).

Positions 1–24 are disordered; that stretch reads MSSVQSQQEQLSQSDPSPSPNSCS. One can recognise a WWE domain in the interval 30-112; sequence DMDAGSLYEP…WDELASEVRR (83 aa). The active-site Nucleophile is serine 351. The region spanning 385-448 is the SAM domain; it reads GDTPTLEEDL…NYFSTRKNSM (64 aa). Residue serine 447 is modified to Phosphoserine. Disordered regions lie at residues 449-470 and 609-638; these read GIKR…SEFC and LQAS…EETS. A DDHD domain is found at 495-700; it reads LIYKPEIFFA…VLLVLKEIYQ (206 aa). A compositionally biased stretch (acidic residues) spans 614–624; sequence TPEETEAEPES.

It belongs to the PA-PLA1 family. In terms of assembly, forms homooligomers and, to a much smaller extent, heterooligomers with DDHD1. Widely expressed (at protein level).

The protein localises to the cytoplasm. The protein resides in the cytosol. It is found in the endoplasmic reticulum-Golgi intermediate compartment. It localises to the golgi apparatus. Its subcellular location is the cis-Golgi network. It carries out the reaction a triacylglycerol + H2O = a diacylglycerol + a fatty acid + H(+). It catalyses the reaction a diacylglycerol + H2O = a monoacylglycerol + a fatty acid + H(+). The enzyme catalyses a 1,3-diacylglycerol + H2O = a 1-acylglycerol + a fatty acid + H(+). The catalysed reaction is a 1-acylglycerol + H2O = glycerol + a fatty acid + H(+). It carries out the reaction 1,2,3-tri-(9Z-octadecenoyl)-glycerol + H2O = di-(9Z)-octadecenoylglycerol + (9Z)-octadecenoate + H(+). It catalyses the reaction di-(9Z)-octadecenoylglycerol + H2O = (9Z-octadecenoyl)-glycerol + (9Z)-octadecenoate + H(+). The enzyme catalyses 1,3-di-(9Z-octadecenoyl)-glycerol + H2O = 1-(9Z-octadecenoyl)-glycerol + (9Z)-octadecenoate + H(+). The catalysed reaction is trihexadecanoylglycerol + H2O = dihexadecanoylglycerol + hexadecanoate + H(+). It carries out the reaction 1,2-di-(9Z-octadecenoyl)-sn-glycero-3-phosphocholine + H2O = (9Z-octadecenoyl)-sn-glycero-3-phosphocholine + (9Z)-octadecenoate + H(+). It catalyses the reaction 1-(9Z-octadecenoyl)-glycerol + H2O = glycerol + (9Z)-octadecenoate + H(+). The enzyme catalyses 1,2-di-(9Z-octadecenoyl)-sn-glycero-3-phosphate + H2O = 2-(9Z-octadecenoyl)-sn-glycero-3-phosphate + (9Z)-octadecenoate + H(+). The catalysed reaction is 1-hexadecanoyl-2-(9Z-octadecenoyl)-sn-glycero-3-phosphate + H2O = 2-(9Z-octadecenoyl)-sn-glycero-3-phosphate + hexadecanoate + H(+). It carries out the reaction 1-hexadecanoyl-2-(9Z-octadecenoyl)-sn-glycero-3-phosphoethanolamine + H2O = 2-(9Z-octadecenoyl)-sn-glycero-3-phosphoethanolamine + hexadecanoate + H(+). It catalyses the reaction 1-hexadecanoyl-2-(9Z-octadecenoyl)-sn-glycero-3-phospho-L-serine + H2O = 2-(9Z-octadecenoyl)-sn-glycero-3-phospho-L-serine + hexadecanoate + H(+). The enzyme catalyses 1-hexadecanoyl-2-(9Z-octadecenoyl)-sn-glycero-3-phosphocholine + H2O = 2-(9Z-octadecenoyl)-sn-glycero-3-phosphocholine + hexadecanoate + H(+). In terms of biological role, diacylglycerol (DAG) and triacylglycerol (TAG) lipase required for proper lipid homeostasis in the central nervous system. It cooperates with PNPLA2/ATGL in neuronal TAG catabolism and hydrolyzes sn-1,3 DAG downstream of PNPLA2/ATGL. In vitro, it also acts as a phospholipase that hydrolyzes preferentially phosphatidic acids, including 1,2-dioleoyl-sn-phosphatidic acid, phosphatidylcholine and phosphatidylethanolamine. Specifically binds to phosphatidylinositol 3-phosphate (PI(3)P), phosphatidylinositol 4-phosphate (PI(4)P), phosphatidylinositol 5-phosphate (PI(5)P) and possibly phosphatidylinositol 4,5-bisphosphate (PI(4,5)P2). May be involved in the maintenance of the endoplasmic reticulum and/or Golgi structures. May regulate the transport between Golgi apparatus and plasma membrane. The chain is Triacylglycerol hydrolase DDHD2 from Homo sapiens (Human).